Here is a 38-residue protein sequence, read N- to C-terminus: Large ribosomal subunit protein bL36 (38 aa).

The protein belongs to the bacterial ribosomal protein bL36 family.

The chain is Large ribosomal subunit protein bL36 from Wigglesworthia glossinidia brevipalpis.